A 351-amino-acid chain; its full sequence is Uroporphyrinogen decarboxylase (351 aa).

Substrate is bound by residues 26–30 (RQAGR), Asp76, Tyr153, Ser208, and His323.

Belongs to the uroporphyrinogen decarboxylase family. In terms of assembly, homodimer.

The protein localises to the cytoplasm. It carries out the reaction uroporphyrinogen III + 4 H(+) = coproporphyrinogen III + 4 CO2. Its pathway is porphyrin-containing compound metabolism; protoporphyrin-IX biosynthesis; coproporphyrinogen-III from 5-aminolevulinate: step 4/4. Catalyzes the decarboxylation of four acetate groups of uroporphyrinogen-III to yield coproporphyrinogen-III. The polypeptide is Uroporphyrinogen decarboxylase (Prochlorococcus marinus (strain MIT 9211)).